We begin with the raw amino-acid sequence, 244 residues long: Pyridoxine 5'-phosphate synthase (244 aa).

Position 12 (Asn-12) interacts with 3-amino-2-oxopropyl phosphate. Asp-14–His-15 lines the 1-deoxy-D-xylulose 5-phosphate pocket. Arg-23 contributes to the 3-amino-2-oxopropyl phosphate binding site. The Proton acceptor role is filled by His-48. 1-deoxy-D-xylulose 5-phosphate-binding residues include Arg-50 and His-55. Glu-75 acts as the Proton acceptor in catalysis. Residue Thr-105 participates in 1-deoxy-D-xylulose 5-phosphate binding. The Proton donor role is filled by His-196. 3-amino-2-oxopropyl phosphate is bound by residues Gly-197 and Gly-218 to His-219.

The protein belongs to the PNP synthase family. Homooctamer; tetramer of dimers.

The protein resides in the cytoplasm. The catalysed reaction is 3-amino-2-oxopropyl phosphate + 1-deoxy-D-xylulose 5-phosphate = pyridoxine 5'-phosphate + phosphate + 2 H2O + H(+). The protein operates within cofactor biosynthesis; pyridoxine 5'-phosphate biosynthesis; pyridoxine 5'-phosphate from D-erythrose 4-phosphate: step 5/5. Its function is as follows. Catalyzes the complicated ring closure reaction between the two acyclic compounds 1-deoxy-D-xylulose-5-phosphate (DXP) and 3-amino-2-oxopropyl phosphate (1-amino-acetone-3-phosphate or AAP) to form pyridoxine 5'-phosphate (PNP) and inorganic phosphate. The protein is Pyridoxine 5'-phosphate synthase of Alcanivorax borkumensis (strain ATCC 700651 / DSM 11573 / NCIMB 13689 / SK2).